Here is a 299-residue protein sequence, read N- to C-terminus: tRNA dimethylallyltransferase (299 aa).

13–20 contacts ATP; the sequence is GPTASGKT. A substrate-binding site is contributed by 15-20; it reads TASGKT. The interval 38–41 is interaction with substrate tRNA; the sequence is DSRQ.

Belongs to the IPP transferase family. Monomer. The cofactor is Mg(2+).

The enzyme catalyses adenosine(37) in tRNA + dimethylallyl diphosphate = N(6)-dimethylallyladenosine(37) in tRNA + diphosphate. Functionally, catalyzes the transfer of a dimethylallyl group onto the adenine at position 37 in tRNAs that read codons beginning with uridine, leading to the formation of N6-(dimethylallyl)adenosine (i(6)A). This is tRNA dimethylallyltransferase from Prochlorococcus marinus (strain NATL2A).